The chain runs to 194 residues: dITP/XTP pyrophosphatase (194 aa).

Position 7–12 (7–12 (SGNVNK)) interacts with substrate. Mg(2+) contacts are provided by Glu-38 and Asp-67. Catalysis depends on Asp-67, which acts as the Proton acceptor. Residues Ser-68, 151–154 (FGYD), Lys-174, and 179–180 (HR) contribute to the substrate site.

This sequence belongs to the HAM1 NTPase family. Homodimer. Mg(2+) is required as a cofactor.

The catalysed reaction is XTP + H2O = XMP + diphosphate + H(+). The enzyme catalyses dITP + H2O = dIMP + diphosphate + H(+). It catalyses the reaction ITP + H2O = IMP + diphosphate + H(+). Its function is as follows. Pyrophosphatase that catalyzes the hydrolysis of nucleoside triphosphates to their monophosphate derivatives, with a high preference for the non-canonical purine nucleotides XTP (xanthosine triphosphate), dITP (deoxyinosine triphosphate) and ITP. Seems to function as a house-cleaning enzyme that removes non-canonical purine nucleotides from the nucleotide pool, thus preventing their incorporation into DNA/RNA and avoiding chromosomal lesions. The chain is dITP/XTP pyrophosphatase from Treponema denticola (strain ATCC 35405 / DSM 14222 / CIP 103919 / JCM 8153 / KCTC 15104).